We begin with the raw amino-acid sequence, 997 residues long: Disease resistance protein RML1A (997 aa).

One can recognise a TIR domain in the interval 12–176 (WRYRVFTSFH…KIARDVSEKL (165 aa)). The active site involves glutamate 87. The region spanning 191–447 (EAHLRKIQSL…HIAIFFNYED (257 aa)) is the NB-ARC domain. 10 LRR repeats span residues 194 to 218 (LRKIQSLLDLDNDEVKMVAISGPAG), 534 to 557 (TSGINEVSISNKALRRMCNLRFLS), 600 to 623 (AENLVELDMKDSRLEYLWPGTQLL), 624 to 647 (TKLKKLNLEGSYNLKELPDLSNAT), 649 to 670 (LEMLDLSVCLALAELPSSIKNL), 671 to 693 (HKLDVIYMDLCESLHMIPTNINL), 694 to 714 (ASLETMYMTGCPQLKTFPAFS), 715 to 737 (TKIKRLYLVRTGVEEVPASITHC), 758 to 781 (PSSLQTLDLSSTDIEMIADSCIKD), and 783 to 808 (QRLDHLRLCRCRKLKSLPELPASLRL).

It catalyses the reaction NAD(+) + H2O = ADP-D-ribose + nicotinamide + H(+). TIR-NB-LRR receptor-like protein that confers resistance to the pathogen Leptosphaeria maculans (blackleg disease). In Arabidopsis thaliana (Mouse-ear cress), this protein is Disease resistance protein RML1A.